The sequence spans 857 residues: Inactive rhomboid protein 1 (857 aa).

At 1 to 413 (MAELRRDSTS…HRPFFTYWIT (413 aa)) the chain is on the cytoplasmic side. Positions 283–307 (FESPSDSTMKDVDSKQLDESELTGS) are disordered. Over residues 290–300 (TMKDVDSKQLD) the composition is skewed to basic and acidic residues. A helical transmembrane segment spans residues 414–434 (FVHILITILAVCIYGIAPVGF). Topologically, residues 435–661 (SQHETVDSVL…PDQFYRLWLS (227 aa)) are lumenal. Asparagine 585 carries N-linked (GlcNAc...) asparagine glycosylation. Residues 662–682 (LFLHAGILHCLVSVCFQMTIL) form a helical membrane-spanning segment. At 683–693 (RDLEKLAGWLR) the chain is on the cytoplasmic side. Residues 694-714 (ISIIYILSGITGNLASAIFLP) traverse the membrane as a helical segment. The Lumenal portion of the chain corresponds to 715 to 716 (YR). A helical transmembrane segment spans residues 717–737 (AEVGPAGSQFGILACLFVELI). Residues 738–748 (QSWQILAQPWR) lie on the Cytoplasmic side of the membrane. A helical membrane pass occupies residues 749–769 (AFTKLLCVVLFLFAFGLLPWI). The Lumenal segment spans residues 770–774 (DNFAH). Residues 775–795 (ISGFISGFFLSFAFLPYISFG) form a helical membrane-spanning segment. Topologically, residues 796–805 (RLDMYRKRCQ) are cytoplasmic. Residues 806–826 (IIIFLVVFLGLFAGLVVLFYV) traverse the membrane as a helical segment. The Lumenal segment spans residues 827–857 (HPIKCEWCELLTCIPFTDKFCEKYDLNAHLH).

This sequence belongs to the peptidase S54 family.

Its subcellular location is the endoplasmic reticulum membrane. It localises to the golgi apparatus membrane. Regulates ADAM17 protease, a sheddase of the epidermal growth factor (EGF) receptor ligands and TNF, thereby plays a role in sleep, cell survival, proliferation, migration and inflammation. Does not exhibit any protease activity on its own. The protein is Inactive rhomboid protein 1 (rhbdf1) of Danio rerio (Zebrafish).